A 59-amino-acid chain; its full sequence is GEIECRSSECCPSGKHLCEGGFVHYCCPNDRYMSCGFLGFGTCYCWKAAYYEYGSTPTC.

Post-translationally, contains 5 disulfide bonds.

Its subcellular location is the secreted. It localises to the nematocyst. The chain is U-actitoxin-Aer2b from Anemonia erythraea (Sea anemone).